The primary structure comprises 478 residues: Cysteine--tRNA ligase (478 aa).

Residue Cys-29 participates in Zn(2+) binding. A 'HIGH' region motif is present at residues 31–41 (VTVYDYCHLGH). Residues Cys-213, His-238, and Glu-242 each contribute to the Zn(2+) site. The 'KMSKS' region signature appears at 270 to 274 (KMSKS). Lys-273 is an ATP binding site.

It belongs to the class-I aminoacyl-tRNA synthetase family. In terms of assembly, monomer. Requires Zn(2+) as cofactor.

It is found in the cytoplasm. The catalysed reaction is tRNA(Cys) + L-cysteine + ATP = L-cysteinyl-tRNA(Cys) + AMP + diphosphate. In Synechococcus sp. (strain ATCC 27144 / PCC 6301 / SAUG 1402/1) (Anacystis nidulans), this protein is Cysteine--tRNA ligase.